The following is a 238-amino-acid chain: LRRN4 C-terminal-like protein (238 aa).

An N-terminal signal peptide occupies residues Met-1–Pro-22. Over Leu-23–Thr-194 the chain is Extracellular. Residues Pro-82–Asp-176 enclose the Fibronectin type-III domain. Asn-132 carries an N-linked (GlcNAc...) asparagine glycan. A helical membrane pass occupies residues Leu-195 to Val-215. The Cytoplasmic portion of the chain corresponds to Trp-216–Leu-238.

It is found in the membrane. The chain is LRRN4 C-terminal-like protein (LRRN4CL) from Homo sapiens (Human).